The primary structure comprises 559 residues: Formate--tetrahydrofolate ligase (559 aa).

ATP is bound at residue 68-75 (TPAGEGKS).

It belongs to the formate--tetrahydrofolate ligase family.

It carries out the reaction (6S)-5,6,7,8-tetrahydrofolate + formate + ATP = (6R)-10-formyltetrahydrofolate + ADP + phosphate. It functions in the pathway one-carbon metabolism; tetrahydrofolate interconversion. This Bacillus licheniformis (strain ATCC 14580 / DSM 13 / JCM 2505 / CCUG 7422 / NBRC 12200 / NCIMB 9375 / NCTC 10341 / NRRL NRS-1264 / Gibson 46) protein is Formate--tetrahydrofolate ligase.